A 198-amino-acid chain; its full sequence is MLPSATSLLRGPCLGLRAAALRLVRQQVPHVCAVRLMRCSSHRRGEALTGAPLDNAPKEYPPKIQQLVQDIASLTLLEISDLNELLKKTLKIQDVGLMPMGGMVPGAAPAPTAPEAAEEDVPKQKERTHFTVRLTEAKPVDKVKLIKEIKNYVQGINLVQAKKLVESLPQEIKANVAKAEAEKIKAALEAVGGTVVLE.

The transit peptide at 1 to 36 (MLPSATSLLRGPCLGLRAAALRLVRQQVPHVCAVRL) directs the protein to the mitochondrion. Residues 106–115 (GAAPAPTAPE) show a composition bias toward low complexity. Residues 106 to 126 (GAAPAPTAPEAAEEDVPKQKE) are disordered. 4 positions are modified to N6-acetyllysine: Lys-125, Lys-138, Lys-142, and Lys-144. Lys-150 carries the post-translational modification N6-acetyllysine; alternate. N6-succinyllysine; alternate is present on Lys-150. A Glycyl lysine isopeptide (Lys-Gly) (interchain with G-Cter in ubiquitin) cross-link involves residue Lys-150. Lys-162 bears the N6-succinyllysine mark. N6-acetyllysine occurs at positions 163 and 173. Lys-178 bears the N6-acetyllysine; alternate mark. Lys-178 carries the post-translational modification N6-succinyllysine; alternate. Lys-185 bears the N6-acetyllysine mark.

It belongs to the bacterial ribosomal protein bL12 family. As to quaternary structure, component of the mitochondrial ribosome large subunit (39S) which comprises a 16S rRNA and about 50 distinct proteins. Interacts with NOA1. Post-translationally, two mature forms are produced by differential two-step proteolytic cleavage. Cleaved by the mitochondrial processing protease to produce the long mature form and subsequently by the mitochondrial intermediate protease to produce the short mature form. In the presence of CUL3, undergoes 'Lys-63'-linked ubiquitination at Lys-150 which results in proteasomal degradation.

It localises to the mitochondrion matrix. As a component of the mitochondrial large ribosomal subunit, plays a role in mitochondrial translation. When present in mitochondria as a free protein not associated with the ribosome, associates with mitochondrial RNA polymerase POLRMT to activate transcription. Required for POLRMT stability. This Bos taurus (Bovine) protein is Large ribosomal subunit protein bL12m (MRPL12).